The sequence spans 282 residues: Formamidopyrimidine-DNA glycosylase (282 aa).

Proline 2 (schiff-base intermediate with DNA) is an active-site residue. The active-site Proton donor is the glutamate 3. The Proton donor; for beta-elimination activity role is filled by lysine 58. Positions 96, 115, and 152 each coordinate DNA. The FPG-type zinc finger occupies 238-272 (HVYGRGGQPCERCGEEILKTVLGGRGTHYCPSCQN). The Proton donor; for delta-elimination activity role is filled by arginine 262.

The protein belongs to the FPG family. Monomer. The cofactor is Zn(2+).

The enzyme catalyses Hydrolysis of DNA containing ring-opened 7-methylguanine residues, releasing 2,6-diamino-4-hydroxy-5-(N-methyl)formamidopyrimidine.. It catalyses the reaction 2'-deoxyribonucleotide-(2'-deoxyribose 5'-phosphate)-2'-deoxyribonucleotide-DNA = a 3'-end 2'-deoxyribonucleotide-(2,3-dehydro-2,3-deoxyribose 5'-phosphate)-DNA + a 5'-end 5'-phospho-2'-deoxyribonucleoside-DNA + H(+). In terms of biological role, involved in base excision repair of DNA damaged by oxidation or by mutagenic agents. Acts as a DNA glycosylase that recognizes and removes damaged bases. Has a preference for oxidized purines, such as 7,8-dihydro-8-oxoguanine (8-oxoG). Has AP (apurinic/apyrimidinic) lyase activity and introduces nicks in the DNA strand. Cleaves the DNA backbone by beta-delta elimination to generate a single-strand break at the site of the removed base with both 3'- and 5'-phosphates. This is Formamidopyrimidine-DNA glycosylase from Corynebacterium aurimucosum (strain ATCC 700975 / DSM 44827 / CIP 107346 / CN-1) (Corynebacterium nigricans).